The following is a 343-amino-acid chain: Phospholipid phosphatase-related protein type 2 (343 aa).

3 helical membrane-spanning segments follow: residues 12-32, 69-89, and 129-149; these read FSII…VILL, VPPA…ILLG, and FLGV…AGQV. The N-linked (GlcNAc...) asparagine glycan is linked to N165. A run of 3 helical transmembrane segments spans residues 210–230, 239–259, and 266–286; these read AALC…VFRV, SLCL…VAEY, and VLAG…CVVH. A disordered region spans residues 290-343; it reads SRPPSGRRLSPWEDLGQAPTMDSPLEKNPRSAGRIRHRHGSPHPSRRTAPAVAT. Residues S299 and S312 each carry the phosphoserine modification. Residues 322-335 show a composition bias toward basic residues; the sequence is GRIRHRHGSPHPSR.

It belongs to the PA-phosphatase related phosphoesterase family.

The protein localises to the membrane. The protein is Phospholipid phosphatase-related protein type 2 of Homo sapiens (Human).